The following is a 563-amino-acid chain: MPMNNFLDEFNLFDSIITMMKNDPCCVEDYEPIVENLNRIFQRTFNDEEHRKSMANSQLFWERLRDTLEAMLLPASLNENSSIPYTRTVRGLILMMRNLAAENQEIPQKLLLQNLVIRGFLHATSEYVVDTPLIKHLYIACLTCLFNIQQNYSTVDMTTFPALLQFLQYPYGIKLEDGEEEEHFWLPYLFLFKTYLNNDEFSNEFFRDNDTPQKDYYCVRDRIFFDIVTAKFIQDQENSFLIEKGRNYLDDSKLEITSIDLSVLECISKSLTTASFGKYLNGLEERQPGKFTTLLQILQLVVTSKEDWNTYELTAIMSWCYPILQRLACKDIPAFFNKSCNDYAPSVAIQLHSTLLSCLDIISDLCKFNHVRKFLISYDSVKILVSLLDTFQKNLLRINFLKGNGDTVNEIKITDHEGNKIEDRLLIFNRVNTNESFIRADNFPHCKLVIIEILASLVYAHPEIQDQIRELGGLALILSNCVIDDNDPFIKERSIVCLKFLLKNNAKNQEYVKKMEAQDVVQDDALSKAGFEISVEKGGKVRLVSKEEDPGNENSEIISIDED.

Phosphothreonine is present on Thr433. Residues 544 to 563 form a disordered region; it reads VSKEEDPGNENSEIISIDED. Ser559 carries the phosphoserine modification.

The protein belongs to the ataxin-10 family.

The protein resides in the cytoplasm. May play a role in the regulation of cytokinesis. The chain is Ataxin-10 homolog (CTR86) from Saccharomyces cerevisiae (strain ATCC 204508 / S288c) (Baker's yeast).